We begin with the raw amino-acid sequence, 357 residues long: Phosphoribosylformylglycinamidine cyclo-ligase (357 aa).

It belongs to the AIR synthase family.

Its subcellular location is the cytoplasm. The enzyme catalyses 2-formamido-N(1)-(5-O-phospho-beta-D-ribosyl)acetamidine + ATP = 5-amino-1-(5-phospho-beta-D-ribosyl)imidazole + ADP + phosphate + H(+). The protein operates within purine metabolism; IMP biosynthesis via de novo pathway; 5-amino-1-(5-phospho-D-ribosyl)imidazole from N(2)-formyl-N(1)-(5-phospho-D-ribosyl)glycinamide: step 2/2. This chain is Phosphoribosylformylglycinamidine cyclo-ligase, found in Agrobacterium fabrum (strain C58 / ATCC 33970) (Agrobacterium tumefaciens (strain C58)).